The following is a 78-amino-acid chain: Large ribosomal subunit protein bL28 (78 aa).

It belongs to the bacterial ribosomal protein bL28 family.

This Thermosynechococcus vestitus (strain NIES-2133 / IAM M-273 / BP-1) protein is Large ribosomal subunit protein bL28.